The sequence spans 566 residues: Cytochrome c oxidase subunit 1 (566 aa).

7 helical membrane-spanning segments follow: residues 29-49 (IGVL…AFTV), 97-117 (VMIT…ALFG), 141-161 (LSYW…FAPG), 189-209 (LAIF…INMI), 227-247 (LFAW…PVLA), 278-298 (ILWF…FGIV), and 310-330 (IFGY…GFVV). His102 lines the Fe(II)-heme a pocket. The Cu cation site is built by His284 and Tyr288. A cross-link (1'-histidyl-3'-tyrosine (His-Tyr)) is located at residues 284–288 (HPEVY). Cu cation is bound by residues His333 and His334. The next 2 membrane-spanning stretches (helical) occupy residues 348 to 368 (FMMA…SWIA) and 381 to 401 (MLWA…GIVL). Residue His419 coordinates heme a3. The next 3 membrane-spanning stretches (helical) occupy residues 420–440 (FHYV…YFWI), 455–475 (LHFW…HFLG), and 499–519 (LGAF…FYTL). His421 serves as a coordination point for Fe(II)-heme a. Positions 543–566 (TSPPPEHTFEQLPKREDWERAPAH) are disordered. Positions 549–566 (HTFEQLPKREDWERAPAH) are enriched in basic and acidic residues.

Belongs to the heme-copper respiratory oxidase family. It depends on Cu(2+) as a cofactor. Heme is required as a cofactor.

The protein localises to the cell membrane. It catalyses the reaction 4 Fe(II)-[cytochrome c] + O2 + 8 H(+)(in) = 4 Fe(III)-[cytochrome c] + 2 H2O + 4 H(+)(out). The protein operates within energy metabolism; oxidative phosphorylation. In terms of biological role, cytochrome c oxidase is the component of the respiratory chain that catalyzes the reduction of oxygen to water. Subunits 1-3 form the functional core of the enzyme complex. Co I is the catalytic subunit of the enzyme. Electrons originating in cytochrome c are transferred via the copper A center of subunit 2 and heme a of subunit 1 to the bimetallic center formed by heme a3 and copper B. This cytochrome c oxidase shows proton pump activity across the membrane in addition to the electron transfer. The protein is Cytochrome c oxidase subunit 1 (ctaD) of Cereibacter sphaeroides (Rhodobacter sphaeroides).